A 353-amino-acid polypeptide reads, in one-letter code: Photosystem II D2 protein (353 aa).

Residue threonine 2 is modified to N-acetylthreonine. Residue threonine 2 is modified to Phosphothreonine. A helical transmembrane segment spans residues 41 to 61 (CAYFALGGWFTGTTFVTSWYT). Residue histidine 118 participates in chlorophyll a binding. Residues 125 to 141 (GFMLRQFELARSVQLRP) traverse the membrane as a helical segment. Glutamine 130 and asparagine 143 together coordinate pheophytin a. The helical transmembrane segment at 153–166 (VFVSVFLIYPLGQS) threads the bilayer. Chlorophyll a is bound at residue histidine 198. The chain crosses the membrane as a helical span at residues 208–228 (AALLCAIHGATVENTLFEDGD). Positions 215 and 262 each coordinate a plastoquinone. Residue histidine 215 participates in Fe cation binding. A Fe cation-binding site is contributed by histidine 269. Residues 279–295 (GLWMSALGVVGLALNLR) form a helical membrane-spanning segment.

This sequence belongs to the reaction center PufL/M/PsbA/D family. In terms of assembly, PSII is composed of 1 copy each of membrane proteins PsbA, PsbB, PsbC, PsbD, PsbE, PsbF, PsbH, PsbI, PsbJ, PsbK, PsbL, PsbM, PsbT, PsbX, PsbY, PsbZ, Psb30/Ycf12, at least 3 peripheral proteins of the oxygen-evolving complex and a large number of cofactors. It forms dimeric complexes. The D1/D2 heterodimer binds P680, chlorophylls that are the primary electron donor of PSII, and subsequent electron acceptors. It shares a non-heme iron and each subunit binds pheophytin, quinone, additional chlorophylls, carotenoids and lipids. There is also a Cl(-1) ion associated with D1 and D2, which is required for oxygen evolution. The PSII complex binds additional chlorophylls, carotenoids and specific lipids. is required as a cofactor.

It localises to the plastid. It is found in the chloroplast thylakoid membrane. It catalyses the reaction 2 a plastoquinone + 4 hnu + 2 H2O = 2 a plastoquinol + O2. Functionally, photosystem II (PSII) is a light-driven water:plastoquinone oxidoreductase that uses light energy to abstract electrons from H(2)O, generating O(2) and a proton gradient subsequently used for ATP formation. It consists of a core antenna complex that captures photons, and an electron transfer chain that converts photonic excitation into a charge separation. The D1/D2 (PsbA/PsbD) reaction center heterodimer binds P680, the primary electron donor of PSII as well as several subsequent electron acceptors. D2 is needed for assembly of a stable PSII complex. The protein is Photosystem II D2 protein of Phaseolus vulgaris (Kidney bean).